A 212-amino-acid chain; its full sequence is Nuclear transcription factor Y subunit C-7 (212 aa).

Residues 1–10 (MEENNGNNNH) show a composition bias toward polar residues. Disordered stretches follow at residues 1–23 (MEEN…LPPP) and 190–212 (EWPA…SGGN).

This sequence belongs to the NFYC/HAP5 subunit family. In terms of assembly, heterotrimeric transcription factor composed of three components, NF-YA, NF-YB and NF-YC. NF-YB and NF-YC must interact and dimerize for NF-YA association and DNA binding. In terms of tissue distribution, expressed in flowers.

The protein localises to the nucleus. In terms of biological role, stimulates the transcription of various genes by recognizing and binding to a CCAAT motif in promoters. The chain is Nuclear transcription factor Y subunit C-7 (NFYC7) from Arabidopsis thaliana (Mouse-ear cress).